Here is a 634-residue protein sequence, read N- to C-terminus: DNA-directed RNA polymerase subunit gamma (634 aa).

Residues C74, C76, C89, and C92 each contribute to the Zn(2+) site. Mg(2+) is bound by residues D471, D473, and D475.

It belongs to the RNA polymerase beta' chain family. RpoC1 subfamily. In cyanobacteria the RNAP catalytic core is composed of 2 alpha, 1 beta, 1 beta', 1 gamma and 1 omega subunit. When a sigma factor is associated with the core the holoenzyme is formed, which can initiate transcription. Requires Mg(2+) as cofactor. Zn(2+) serves as cofactor.

It catalyses the reaction RNA(n) + a ribonucleoside 5'-triphosphate = RNA(n+1) + diphosphate. DNA-dependent RNA polymerase catalyzes the transcription of DNA into RNA using the four ribonucleoside triphosphates as substrates. The sequence is that of DNA-directed RNA polymerase subunit gamma from Parasynechococcus marenigrum (strain WH8102).